The chain runs to 69 residues: Cold shock-like protein CspE (69 aa).

One can recognise a CSD domain in the interval 6-66 (GNVKWFNESK…GAKGPSAANV (61 aa)).

The protein localises to the cytoplasm. This is Cold shock-like protein CspE (cspE) from Buchnera aphidicola subsp. Acyrthosiphon pisum (strain APS) (Acyrthosiphon pisum symbiotic bacterium).